The chain runs to 341 residues: Holliday junction branch migration complex subunit RuvB (341 aa).

A large ATPase domain (RuvB-L) region spans residues 1–182 (MKDRLISAVA…FGVISRLEYY (182 aa)). Residues leucine 21, arginine 22, glycine 63, lysine 66, threonine 67, threonine 68, 129 to 131 (EDY), arginine 172, tyrosine 182, and arginine 219 each bind ATP. Threonine 67 is a Mg(2+) binding site. A small ATPAse domain (RuvB-S) region spans residues 183-253 (RPEDLVLIVN…VAVEALKFLE (71 aa)). Residues 256 to 341 (PLGLDFADRR…REETDQVSLW (86 aa)) are head domain (RuvB-H). DNA is bound by residues arginine 311 and arginine 316.

It belongs to the RuvB family. Homohexamer. Forms an RuvA(8)-RuvB(12)-Holliday junction (HJ) complex. HJ DNA is sandwiched between 2 RuvA tetramers; dsDNA enters through RuvA and exits via RuvB. An RuvB hexamer assembles on each DNA strand where it exits the tetramer. Each RuvB hexamer is contacted by two RuvA subunits (via domain III) on 2 adjacent RuvB subunits; this complex drives branch migration. In the full resolvosome a probable DNA-RuvA(4)-RuvB(12)-RuvC(2) complex forms which resolves the HJ.

It localises to the cytoplasm. It catalyses the reaction ATP + H2O = ADP + phosphate + H(+). Functionally, the RuvA-RuvB-RuvC complex processes Holliday junction (HJ) DNA during genetic recombination and DNA repair, while the RuvA-RuvB complex plays an important role in the rescue of blocked DNA replication forks via replication fork reversal (RFR). RuvA specifically binds to HJ cruciform DNA, conferring on it an open structure. The RuvB hexamer acts as an ATP-dependent pump, pulling dsDNA into and through the RuvAB complex. RuvB forms 2 homohexamers on either side of HJ DNA bound by 1 or 2 RuvA tetramers; 4 subunits per hexamer contact DNA at a time. Coordinated motions by a converter formed by DNA-disengaged RuvB subunits stimulates ATP hydrolysis and nucleotide exchange. Immobilization of the converter enables RuvB to convert the ATP-contained energy into a lever motion, pulling 2 nucleotides of DNA out of the RuvA tetramer per ATP hydrolyzed, thus driving DNA branch migration. The RuvB motors rotate together with the DNA substrate, which together with the progressing nucleotide cycle form the mechanistic basis for DNA recombination by continuous HJ branch migration. Branch migration allows RuvC to scan DNA until it finds its consensus sequence, where it cleaves and resolves cruciform DNA. This is Holliday junction branch migration complex subunit RuvB from Pelotomaculum thermopropionicum (strain DSM 13744 / JCM 10971 / SI).